Reading from the N-terminus, the 210-residue chain is Tetraspanin-31 (210 aa).

Over 1 to 12 the chain is Cytoplasmic; that stretch reads MVCGGFACSKNA. The chain crosses the membrane as a helical span at residues 13 to 33; sequence LCALNVVYMLVSLLLIGVAAW. Over 34 to 44 the chain is Extracellular; sequence GKGLGLVSSIH. A helical membrane pass occupies residues 45–65; the sequence is IIGGVIAVGVFLLLIAVAGLV. Residues 66–72 lie on the Cytoplasmic side of the membrane; the sequence is GAVNHHQ. The helical transmembrane segment at 73 to 93 threads the bilayer; that stretch reads VLLFFYMIILGLVFIFQFVIS. Topologically, residues 94–173 are extracellular; it reads CSCLAINRSK…FLKHSDEALK (80 aa). 4 N-linked (GlcNAc...) asparagine glycosylation sites follow: N100, N109, N117, and N134. The helical transmembrane segment at 174–194 threads the bilayer; sequence ILGGVGLFFSFTEILGVWLAM. Residues 195–210 are Cytoplasmic-facing; the sequence is RFRNQKDPRANPSAFL.

It belongs to the tetraspanin (TM4SF) family.

It localises to the membrane. The sequence is that of Tetraspanin-31 (TSPAN31) from Homo sapiens (Human).